The following is a 914-amino-acid chain: Effector protein hopAE1 (914 aa).

Polar residues predominate over residues 1-13; sequence MMPSQITRSSHSS. Residues 1 to 31 are disordered; sequence MMPSQITRSSHSSLPEVAPASGDAAGVSEQT.

This sequence belongs to the HopW family.

The protein localises to the secreted. The sequence is that of Effector protein hopAE1 (hopAE1) from Pseudomonas syringae pv. syringae (strain B728a).